The following is a 329-amino-acid chain: DNA-directed RNA polymerase subunit alpha (329 aa).

The interval 1 to 234 is alpha N-terminal domain (alpha-NTD); sequence MQGSVTEFLK…EQLDAFVELR (234 aa). The alpha C-terminal domain (alpha-CTD) stretch occupies residues 248–329; that stretch reads FDPILLRPVD…WPPASLIDND (82 aa).

It belongs to the RNA polymerase alpha chain family. In terms of assembly, homodimer. The RNAP catalytic core consists of 2 alpha, 1 beta, 1 beta' and 1 omega subunit. When a sigma factor is associated with the core the holoenzyme is formed, which can initiate transcription.

It carries out the reaction RNA(n) + a ribonucleoside 5'-triphosphate = RNA(n+1) + diphosphate. DNA-dependent RNA polymerase catalyzes the transcription of DNA into RNA using the four ribonucleoside triphosphates as substrates. The polypeptide is DNA-directed RNA polymerase subunit alpha (Idiomarina loihiensis (strain ATCC BAA-735 / DSM 15497 / L2-TR)).